The chain runs to 224 residues: 2-C-methyl-D-erythritol 4-phosphate cytidylyltransferase (224 aa).

Belongs to the IspD/TarI cytidylyltransferase family. IspD subfamily.

The enzyme catalyses 2-C-methyl-D-erythritol 4-phosphate + CTP + H(+) = 4-CDP-2-C-methyl-D-erythritol + diphosphate. It functions in the pathway isoprenoid biosynthesis; isopentenyl diphosphate biosynthesis via DXP pathway; isopentenyl diphosphate from 1-deoxy-D-xylulose 5-phosphate: step 2/6. Functionally, catalyzes the formation of 4-diphosphocytidyl-2-C-methyl-D-erythritol from CTP and 2-C-methyl-D-erythritol 4-phosphate (MEP). This chain is 2-C-methyl-D-erythritol 4-phosphate cytidylyltransferase, found in Caldicellulosiruptor bescii (strain ATCC BAA-1888 / DSM 6725 / KCTC 15123 / Z-1320) (Anaerocellum thermophilum).